Here is a 673-residue protein sequence, read N- to C-terminus: Probable boron transporter 7 (673 aa).

Topologically, residues 1 to 35 (MEGVKFPFGGIINDFNGRRKCYKQDWLAAFNSGVR) are cytoplasmic. The chain crosses the membrane as a helical span at residues 36–56 (ILAPTLYIFIASALPVIAFGE). Over 57–75 (QLSRETDRSLGIAESLAST) the chain is Extracellular. A helical transmembrane segment spans residues 76 to 96 (ALCGIIHSVFGGQPLLIVGVA). The Cytoplasmic segment spans residues 97–121 (EPTIIMYTYLHSFSKSRPELGQKLY). The chain crosses the membrane as a helical span at residues 122-142 (LAWAGWVCVWTAVLLMLLAML). Residues 143-160 (NACNIISRFTRIAGELFG) lie on the Extracellular side of the membrane. The chain crosses the membrane as a helical span at residues 161–181 (MLITVLFIQEAVKGLIGEFLV). At 182-197 (PKSDDPSLEVYQFQWR) the chain is on the cytoplasmic side. The helical transmembrane segment at 198–218 (YTNGLLAVIFSFGLLYTALKS) threads the bilayer. Over 219-233 (RRARSWKYGFRWMRG) the chain is Extracellular. A helical transmembrane segment spans residues 234 to 254 (FIGDYGTLLMLVLWSAFSYTV). The Cytoplasmic portion of the chain corresponds to 255 to 289 (PRNLPEGVPRRLELPLPWASESLYHWTVVKDMAKV). Residues 290 to 310 (PPLYILAAFIPAIMIAGLYFF) traverse the membrane as a helical segment. Topologically, residues 311–330 (DHCVSAQMAQQKEFNLKNPT) are extracellular. The helical transmembrane segment at 331–351 (AYHYDIFILGIMTLICGLLGL) threads the bilayer. Over 352–468 (PPSNGVIPQS…EQRVSNLLQS (117 aa)) the chain is Cytoplasmic. The chain crosses the membrane as a helical span at residues 469–489 (VLVGLLILAVPVLRMIPTSVL). The Extracellular segment spans residues 490–556 (WGYFTYMAVD…QLLYFLICYG (67 aa)). The chain crosses the membrane as a helical span at residues 557-577 (VTWIPVGGILFPLPFFILIAL). Residues 578-673 (RQYILQRLFD…SQMVKIYNHS (96 aa)) lie on the Cytoplasmic side of the membrane.

This sequence belongs to the anion exchanger (TC 2.A.31.3) family.

It is found in the membrane. Putative boron transporter. Boron is essential for maintaining the integrity of plants cell walls. This chain is Probable boron transporter 7 (BOR7), found in Arabidopsis thaliana (Mouse-ear cress).